We begin with the raw amino-acid sequence, 206 residues long: Outer-membrane lipoprotein LolB (206 aa).

A signal peptide spans 1–18; sequence MKTFKFFTALFATAILTA. A lipid anchor (N-palmitoyl cysteine) is attached at Cys-19. Cys-19 carries S-diacylglycerol cysteine lipidation.

Belongs to the LolB family. In terms of assembly, monomer.

The protein resides in the cell outer membrane. Functionally, plays a critical role in the incorporation of lipoproteins in the outer membrane after they are released by the LolA protein. This Haemophilus influenzae (strain PittGG) protein is Outer-membrane lipoprotein LolB.